Here is a 359-residue protein sequence, read N- to C-terminus: Pyruvate dehydrogenase E1 component subunit beta, mitochondrial (359 aa).

The transit peptide at 1–30 (MAAVAGLVRGPLRQASGLLKRRFHRSAPAA) directs the protein to the mitochondrion. At Y67 the chain carries Phosphotyrosine. E89 contributes to the thiamine diphosphate binding site. Residues I142, A190, I191, D193, and N195 each coordinate K(+). K354 is modified (N6-acetyllysine).

In terms of assembly, heterotetramer of two PDHA1 and two PDHB subunits. The heterotetramer interacts with DLAT, and is part of the multimeric pyruvate dehydrogenase complex that contains multiple copies of pyruvate dehydrogenase (E1), dihydrolipoamide acetyltransferase (DLAT, E2) and lipoamide dehydrogenase (DLD, E3). These subunits are bound to an inner core composed of about 48 DLAT and 12 PDHX molecules. Interacts with DLAT. The cofactor is thiamine diphosphate.

Its subcellular location is the mitochondrion matrix. It carries out the reaction N(6)-[(R)-lipoyl]-L-lysyl-[protein] + pyruvate + H(+) = N(6)-[(R)-S(8)-acetyldihydrolipoyl]-L-lysyl-[protein] + CO2. Functionally, the pyruvate dehydrogenase complex catalyzes the overall conversion of pyruvate to acetyl-CoA and CO(2), and thereby links the glycolytic pathway to the tricarboxylic cycle. This Rattus norvegicus (Rat) protein is Pyruvate dehydrogenase E1 component subunit beta, mitochondrial (Pdhb).